The primary structure comprises 96 residues: Protein YddL (96 aa).

Residues 1–21 form the signal peptide; that stretch reads MKLKIVAVVVTGLLAANVAHA.

The polypeptide is Protein YddL (yddL) (Escherichia coli (strain K12)).